Consider the following 247-residue polypeptide: MVTTTPENEVLTSTSAVTGLPQKRYYRQRAHSNPIADHCFDYPARPEDVDWRSLYPSIRADQEVSFADIGCGYGGFLVTLGELFPEKISIGMEIRVKVSDYVLDRITALRQKSSGTGAYQNIACLRTNAMKYLPNYFRKGQLEKMFFLYPDPHFKRAKHKWRIINQALLSEYAYVLRKGGLVYTMTDVEDLHNWIVTHMDEHPLYERLDEEEANTDPITPKLYQSSEEGAKVVRNKGDHFLAIFRRL.

S-adenosyl-L-methionine contacts are provided by residues glycine 70, 93–94, 128–129, and leucine 148; these read EI and NA. Residue aspartate 151 is part of the active site. Residue 226–228 participates in S-adenosyl-L-methionine binding; the sequence is SEE.

It belongs to the class I-like SAM-binding methyltransferase superfamily. TrmB family.

It is found in the nucleus. The catalysed reaction is guanosine(46) in tRNA + S-adenosyl-L-methionine = N(7)-methylguanosine(46) in tRNA + S-adenosyl-L-homocysteine. Its pathway is tRNA modification; N(7)-methylguanine-tRNA biosynthesis. In terms of biological role, catalyzes the formation of N(7)-methylguanine at position 46 (m7G46) in tRNA. The protein is tRNA (guanine-N(7)-)-methyltransferase of Drosophila persimilis (Fruit fly).